Reading from the N-terminus, the 463-residue chain is L-seryl-tRNA(Sec) selenium transferase (463 aa).

An N6-(pyridoxal phosphate)lysine modification is found at Lys295.

This sequence belongs to the SelA family. As to quaternary structure, homodecamer; pentamer of dimers. Binds only one seryl-tRNA(Sec) per dimer. Pyridoxal 5'-phosphate is required as a cofactor.

It is found in the cytoplasm. It carries out the reaction L-seryl-tRNA(Sec) + selenophosphate + H(+) = L-selenocysteinyl-tRNA(Sec) + phosphate. It participates in aminoacyl-tRNA biosynthesis; selenocysteinyl-tRNA(Sec) biosynthesis; selenocysteinyl-tRNA(Sec) from L-seryl-tRNA(Sec) (bacterial route): step 1/1. Functionally, converts seryl-tRNA(Sec) to selenocysteinyl-tRNA(Sec) required for selenoprotein biosynthesis. This is L-seryl-tRNA(Sec) selenium transferase from Salmonella paratyphi A (strain AKU_12601).